We begin with the raw amino-acid sequence, 388 residues long: Lipid-A-disaccharide synthase (388 aa).

It belongs to the LpxB family.

It catalyses the reaction a lipid X + a UDP-2-N,3-O-bis[(3R)-3-hydroxyacyl]-alpha-D-glucosamine = a lipid A disaccharide + UDP + H(+). The protein operates within bacterial outer membrane biogenesis; LPS lipid A biosynthesis. Functionally, condensation of UDP-2,3-diacylglucosamine and 2,3-diacylglucosamine-1-phosphate to form lipid A disaccharide, a precursor of lipid A, a phosphorylated glycolipid that anchors the lipopolysaccharide to the outer membrane of the cell. This Burkholderia pseudomallei (strain 1710b) protein is Lipid-A-disaccharide synthase.